We begin with the raw amino-acid sequence, 86 residues long: Large ribosomal subunit protein bL27 (86 aa).

Positions 1–10 are enriched in gly residues; it reads MAQKKGGGST. The disordered stretch occupies residues 1 to 21; the sequence is MAQKKGGGSTRNGRDSESKRL.

This sequence belongs to the bacterial ribosomal protein bL27 family.

The polypeptide is Large ribosomal subunit protein bL27 (Cupriavidus taiwanensis (strain DSM 17343 / BCRC 17206 / CCUG 44338 / CIP 107171 / LMG 19424 / R1) (Ralstonia taiwanensis (strain LMG 19424))).